The following is a 325-amino-acid chain: Eukaryotic translation initiation factor 3 subunit I (325 aa).

4 WD repeats span residues 8–47 (GHER…RLGT), 50–91 (GHTG…ALLK), 144–183 (CNDS…VLVN), and 186–225 (EHSR…HQKT). Position 219 is a phosphothreonine (Thr219). N6-acetyllysine is present on Lys264. Residue Lys282 forms a Glycyl lysine isopeptide (Lys-Gly) (interchain with G-Cter in ubiquitin) linkage. A WD 5 repeat occupies 283–324 (GHFGPINSVAFHPDGKSYSSGGEDGYVRIHYFDPQYFEFEFE). Tyr308 is subject to Phosphotyrosine.

This sequence belongs to the eIF-3 subunit I family. Component of the eukaryotic translation initiation factor 3 (eIF-3) complex, which is composed of 13 subunits: EIF3A, EIF3B, EIF3C, EIF3D, EIF3E, EIF3F, EIF3G, EIF3H, EIF3I, EIF3J, EIF3K, EIF3L and EIF3M. The eIF-3 complex appears to include 3 stable modules: module A is composed of EIF3A, EIF3B, EIF3G and EIF3I; module B is composed of EIF3F, EIF3H, and EIF3M; and module C is composed of EIF3C, EIF3D, EIF3E, EIF3K and EIF3L. EIF3C of module C binds EIF3B of module A and EIF3H of module B, thereby linking the three modules. EIF3J is a labile subunit that binds to the eIF-3 complex via EIF3B. The eIF-3 complex interacts with RPS6KB1 under conditions of nutrient depletion. Mitogenic stimulation leads to binding and activation of a complex composed of MTOR and RPTOR, leading to phosphorylation and release of RPS6KB1 and binding of EIF4B to eIF-3. In terms of processing, phosphorylated by TGF-beta type II receptor.

The protein localises to the cytoplasm. Its function is as follows. Component of the eukaryotic translation initiation factor 3 (eIF-3) complex, which is required for several steps in the initiation of protein synthesis. The eIF-3 complex associates with the 40S ribosome and facilitates the recruitment of eIF-1, eIF-1A, eIF-2:GTP:methionyl-tRNAi and eIF-5 to form the 43S pre-initiation complex (43S PIC). The eIF-3 complex stimulates mRNA recruitment to the 43S PIC and scanning of the mRNA for AUG recognition. The eIF-3 complex is also required for disassembly and recycling of post-termination ribosomal complexes and subsequently prevents premature joining of the 40S and 60S ribosomal subunits prior to initiation. The eIF-3 complex specifically targets and initiates translation of a subset of mRNAs involved in cell proliferation, including cell cycling, differentiation and apoptosis, and uses different modes of RNA stem-loop binding to exert either translational activation or repression. In Bos taurus (Bovine), this protein is Eukaryotic translation initiation factor 3 subunit I.